The chain runs to 104 residues: Protein MGF 300-3L (104 aa).

It belongs to the asfivirus MGF 300 family.

Functionally, plays a role in virus cell tropism, and may be required for efficient virus replication in macrophages. The protein is Protein MGF 300-3L of African swine fever virus (isolate Tick/Malawi/Lil 20-1/1983) (ASFV).